Here is a 350-residue protein sequence, read N- to C-terminus: Methionine import ATP-binding protein MetN (350 aa).

Residues 2 to 241 (IQIKNLKKEY…PQAPVTRSFV (240 aa)) enclose the ABC transporter domain. 38 to 45 (GHSGAGKS) contributes to the ATP binding site.

This sequence belongs to the ABC transporter superfamily. Methionine importer (TC 3.A.1.24) family. In terms of assembly, the complex is composed of two ATP-binding proteins (MetN), two transmembrane proteins (MetI) and a solute-binding protein (MetQ).

Its subcellular location is the cell inner membrane. The catalysed reaction is L-methionine(out) + ATP + H2O = L-methionine(in) + ADP + phosphate + H(+). It catalyses the reaction D-methionine(out) + ATP + H2O = D-methionine(in) + ADP + phosphate + H(+). Its function is as follows. Part of the ABC transporter complex MetNIQ involved in methionine import. Responsible for energy coupling to the transport system. The polypeptide is Methionine import ATP-binding protein MetN (Francisella tularensis subsp. holarctica (strain LVS)).